The primary structure comprises 364 residues: Peptide chain release factor 1 (364 aa).

An N5-methylglutamine modification is found at Gln-230.

Belongs to the prokaryotic/mitochondrial release factor family. Post-translationally, methylated by PrmC. Methylation increases the termination efficiency of RF1.

The protein resides in the cytoplasm. In terms of biological role, peptide chain release factor 1 directs the termination of translation in response to the peptide chain termination codons UAG and UAA. In Acidothermus cellulolyticus (strain ATCC 43068 / DSM 8971 / 11B), this protein is Peptide chain release factor 1.